The sequence spans 428 residues: Probable mannosyltransferase YUR1 (428 aa).

The Cytoplasmic segment spans residues 1–3 (MAK). A helical; Signal-anchor for type II membrane protein membrane pass occupies residues 4–24 (GGSLYIVGIFLPIWTFMIYIF). The segment at 25-88 (GKELFLIRKY…TRQNDSDSFH (64 aa)) is stem region. The Lumenal portion of the chain corresponds to 25–428 (GKELFLIRKY…YFLKEEQDEI (404 aa)). Asn-77, Asn-82, Asn-92, and Asn-167 each carry an N-linked (GlcNAc...) asparagine glycan. The interval 89 to 428 (LRENATILML…YFLKEEQDEI (340 aa)) is catalytic. Glu-313 (nucleophile) is an active-site residue. A glycan (N-linked (GlcNAc...) asparagine) is linked at Asn-414.

Belongs to the glycosyltransferase 15 family.

The protein localises to the golgi apparatus membrane. It functions in the pathway protein modification; protein glycosylation. Its function is as follows. Possible glycosyltransferase involved in N-linked glycosylation. Transfers an alpha-D-mannosyl residue from GDP-mannose into lipid-linked oligosaccharide, forming an alpha-(1-&gt;2)-D-mannosyl-D-mannose linkage. This Saccharomyces cerevisiae (strain ATCC 204508 / S288c) (Baker's yeast) protein is Probable mannosyltransferase YUR1 (YUR1).